The sequence spans 102 residues: Urease subunit beta (102 aa).

It belongs to the urease beta subunit family. Heterotrimer of UreA (gamma), UreB (beta) and UreC (alpha) subunits. Three heterotrimers associate to form the active enzyme.

The protein localises to the cytoplasm. The enzyme catalyses urea + 2 H2O + H(+) = hydrogencarbonate + 2 NH4(+). It participates in nitrogen metabolism; urea degradation; CO(2) and NH(3) from urea (urease route): step 1/1. The polypeptide is Urease subunit beta (Bordetella parapertussis (strain 12822 / ATCC BAA-587 / NCTC 13253)).